We begin with the raw amino-acid sequence, 102 residues long: Salivary thrombin inhibitor anophelin (102 aa).

Positions M1–S21 are cleaved as a signal peptide. The interval Y25–H102 is disordered. Over residues S59–Q69 the composition is skewed to polar residues. Residues D70–R73 are blocks active site cleft of host thrombin in a reverse direction compared to substrates. Polar residues predominate over residues Q80–P90. Residues S91–H102 show a composition bias toward low complexity.

Belongs to the anophelin family. As to quaternary structure, interacts with human F2 (thrombin); the interaction results in thrombin inhibition.

The protein resides in the secreted. Its function is as follows. Salivary protein with anticoagulant activity that inhibits host thrombin (F2). The chain is Salivary thrombin inhibitor anophelin from Anopheles funestus (African malaria mosquito).